A 156-amino-acid polypeptide reads, in one-letter code: ATP synthase subunit b (156 aa).

A helical membrane pass occupies residues 7-29; it reads LLGQAISFLLFVWFCMKFVWPPL.

This sequence belongs to the ATPase B chain family. As to quaternary structure, F-type ATPases have 2 components, F(1) - the catalytic core - and F(0) - the membrane proton channel. F(1) has five subunits: alpha(3), beta(3), gamma(1), delta(1), epsilon(1). F(0) has three main subunits: a(1), b(2) and c(10-14). The alpha and beta chains form an alternating ring which encloses part of the gamma chain. F(1) is attached to F(0) by a central stalk formed by the gamma and epsilon chains, while a peripheral stalk is formed by the delta and b chains.

The protein resides in the cell inner membrane. In terms of biological role, f(1)F(0) ATP synthase produces ATP from ADP in the presence of a proton or sodium gradient. F-type ATPases consist of two structural domains, F(1) containing the extramembraneous catalytic core and F(0) containing the membrane proton channel, linked together by a central stalk and a peripheral stalk. During catalysis, ATP synthesis in the catalytic domain of F(1) is coupled via a rotary mechanism of the central stalk subunits to proton translocation. Functionally, component of the F(0) channel, it forms part of the peripheral stalk, linking F(1) to F(0). The chain is ATP synthase subunit b from Shewanella halifaxensis (strain HAW-EB4).